Consider the following 253-residue polypeptide: uncharacterized protein (253 aa).

8 residues coordinate NADP(+): I17, S36, D62, N89, Y158, K162, V191, and T193. Y158 functions as the Proton donor in the catalytic mechanism. K162 functions as the Lowers pKa of active site Tyr in the catalytic mechanism.

This sequence belongs to the short-chain dehydrogenases/reductases (SDR) family.

The protein resides in the cytoplasm. Its subcellular location is the nucleus. This is an uncharacterized protein from Schizosaccharomyces pombe (strain 972 / ATCC 24843) (Fission yeast).